Reading from the N-terminus, the 717-residue chain is Ubiquitin carboxyl-terminal hydrolase 11 (717 aa).

Residues 231 to 268 are disordered; that stretch reads ATAPPVHSLEVSSQIRDSSQDSSSSLSKVEKPKEEEGK. Positions 242–257 are enriched in low complexity; it reads SSQIRDSSQDSSSSLS. The segment covering 258 to 268 has biased composition (basic and acidic residues); the sequence is KVEKPKEEEGK. The USP domain occupies 298 to 707; it reads TGLQNPCNTC…EVYVLFYERM (410 aa). The active-site Nucleophile is the Cys307. Residues 531 to 577 form a disordered region; the sequence is KKEEITSQKKKSTIFGFHSRSRSKSPHHHHHHHHSSDDSTKNAKKRN. Basic residues predominate over residues 549–564; the sequence is SRSRSKSPHHHHHHHH. His649 serves as the catalytic Proton acceptor.

It belongs to the peptidase C19 family.

It catalyses the reaction Thiol-dependent hydrolysis of ester, thioester, amide, peptide and isopeptide bonds formed by the C-terminal Gly of ubiquitin (a 76-residue protein attached to proteins as an intracellular targeting signal).. This chain is Ubiquitin carboxyl-terminal hydrolase 11 (UBP11), found in Saccharomyces cerevisiae (strain ATCC 204508 / S288c) (Baker's yeast).